Here is a 325-residue protein sequence, read N- to C-terminus: Protease HtpX homolog (325 aa).

A helical transmembrane segment spans residues 20-40 (IGYLLGGGGGMMIALVIAVAM). His-130 contributes to the Zn(2+) binding site. Glu-131 is an active-site residue. His-134 contacts Zn(2+). 2 helical membrane-spanning segments follow: residues 145 to 165 (IVATLAGAISMLGNFAFFLGG) and 173 to 193 (VMGVVGTLLAMIVAPFGAMIV). Glu-202 is a binding site for Zn(2+). Residues 288–325 (AMTARAAAPSQNSGPWGQRSDNAGGNSNGGSRYRGPWS) form a disordered region. Positions 306-325 (RSDNAGGNSNGGSRYRGPWS) are enriched in low complexity.

This sequence belongs to the peptidase M48B family. Requires Zn(2+) as cofactor.

It is found in the cell inner membrane. This chain is Protease HtpX homolog, found in Brucella abortus (strain S19).